A 253-amino-acid polypeptide reads, in one-letter code: Imidazole glycerol phosphate synthase subunit HisF (253 aa).

Residues D11 and D130 contribute to the active site.

The protein belongs to the HisA/HisF family. In terms of assembly, heterodimer of HisH and HisF.

It is found in the cytoplasm. It carries out the reaction 5-[(5-phospho-1-deoxy-D-ribulos-1-ylimino)methylamino]-1-(5-phospho-beta-D-ribosyl)imidazole-4-carboxamide + L-glutamine = D-erythro-1-(imidazol-4-yl)glycerol 3-phosphate + 5-amino-1-(5-phospho-beta-D-ribosyl)imidazole-4-carboxamide + L-glutamate + H(+). It participates in amino-acid biosynthesis; L-histidine biosynthesis; L-histidine from 5-phospho-alpha-D-ribose 1-diphosphate: step 5/9. Functionally, IGPS catalyzes the conversion of PRFAR and glutamine to IGP, AICAR and glutamate. The HisF subunit catalyzes the cyclization activity that produces IGP and AICAR from PRFAR using the ammonia provided by the HisH subunit. This chain is Imidazole glycerol phosphate synthase subunit HisF, found in Dehalococcoides mccartyi (strain ATCC BAA-2100 / JCM 16839 / KCTC 5957 / BAV1).